A 554-amino-acid polypeptide reads, in one-letter code: Guanine nucleotide-binding protein alpha-2 subunit (554 aa).

2 disordered regions span residues 1-139 and 157-183; these read MGLC…NNSN and VNGN…THSG. Gly2 carries the N-myristoyl glycine lipid modification. Cys4 is lipidated: S-palmitoyl cysteine. Basic and acidic residues-rich tracts occupy residues 7–17 and 28–43; these read KDSRESTHDGG and ANRR…DKKQ. Residues 52 to 66 are compositionally biased toward low complexity; that stretch reads GSIVNAASNINNSSS. Polar residues predominate over residues 67 to 85; the sequence is GKTKISTVSEDGTVSNGVG. Residues 91–139 are compositionally biased toward low complexity; sequence DNANNKNNGNNNNSNNNDNNNNNNNNIGNNINGNNNNDSENIHDSNNSN. One can recognise a G-alpha domain in the interval 228-554; that stretch reads NALKVLLLGS…ENSLKDSGVL (327 aa). The segment at 231-244 is G1 motif; the sequence is KVLLLGSGESGKST. Glu239, Ser240, Gly241, Lys242, Ser243, Thr244, Asp351, Ile376, Thr382, Gly405, Asn471, Lys472, Asp474, and Ala526 together coordinate GTP. Ser243 is a binding site for Mg(2+). The segment at 374–382 is G2 motif; the sequence is DVIRTRKKT. Thr382 is a binding site for Mg(2+). The G3 motif stretch occupies residues 398–407; it reads LHFFDVGGQR. A G4 motif region spans residues 467 to 474; sequence VLFLNKID. The segment at 524 to 529 is G5 motif; the sequence is TQATDT.

It belongs to the G-alpha family. As to quaternary structure, g proteins are composed of 3 units; alpha, beta and gamma. The alpha chain contains the guanine nucleotide binding site. Requires Mg(2+) as cofactor.

Functionally, guanine nucleotide-binding proteins (G proteins) are involved as modulators or transducers in various transmembrane signaling systems. This protein may be involved in the determination of the cAMP level according to nutritional conditions, most probably as a regulator of adenylyl cyclase. This chain is Guanine nucleotide-binding protein alpha-2 subunit (GPA2), found in Kluyveromyces lactis (strain ATCC 8585 / CBS 2359 / DSM 70799 / NBRC 1267 / NRRL Y-1140 / WM37) (Yeast).